The following is a 278-amino-acid chain: Indole-3-glycerol phosphate synthase (278 aa).

The protein belongs to the TrpC family.

The catalysed reaction is 1-(2-carboxyphenylamino)-1-deoxy-D-ribulose 5-phosphate + H(+) = (1S,2R)-1-C-(indol-3-yl)glycerol 3-phosphate + CO2 + H2O. It participates in amino-acid biosynthesis; L-tryptophan biosynthesis; L-tryptophan from chorismate: step 4/5. This chain is Indole-3-glycerol phosphate synthase, found in Pseudomonas fluorescens (strain Pf0-1).